A 329-amino-acid polypeptide reads, in one-letter code: BTB/POZ domain-containing adapter for CUL3-mediated RhoA degradation protein 1 (329 aa).

Residues 1-22 (MSAEASGPAAAAAPSLEAPKPS) are compositionally biased toward low complexity. The interval 1–31 (MSAEASGPAAAAAPSLEAPKPSGLEPGPAAY) is disordered. One can recognise a BTB domain in the interval 41 to 109 (KYVKLNVGGS…LRDGSVPLPE (69 aa)). The interval 282–303 (ATGGAAGAGGAGRGEDEENREH) is disordered.

It belongs to the BACURD family. As to quaternary structure, homotetramer; forms a two-fold symmetric tetramer in solution. Interacts with CUL3; interaction is direct and forms a 5:5 heterodecamer. Component of the BCR(KCTD13) E3 ubiquitin ligase complex, at least composed of CUL3, KCTD13/BACURD1 and RBX1. Interacts with RHOA; with a preference for RhoA-GDP. Interacts with POLD2 and PCNA. Interacts with SPRTN. As to expression, expressed in a wide variety of tissues.

Its subcellular location is the nucleus. Its pathway is protein modification; protein ubiquitination. In terms of biological role, substrate-specific adapter of a BCR (BTB-CUL3-RBX1) E3 ubiquitin-protein ligase complex required for synaptic transmission. The BCR(KCTD13) E3 ubiquitin ligase complex mediates the ubiquitination of RHOA, leading to its degradation by the proteasome Degradation of RHOA regulates the actin cytoskeleton and promotes synaptic transmission. This Homo sapiens (Human) protein is BTB/POZ domain-containing adapter for CUL3-mediated RhoA degradation protein 1 (KCTD13).